Consider the following 274-residue polypeptide: tRNA-cytidine(32) 2-sulfurtransferase (274 aa).

The PP-loop motif motif lies at Ser40–Ser45. Residues Cys115, Cys118, and Cys206 each contribute to the [4Fe-4S] cluster site.

This sequence belongs to the TtcA family. Homodimer. Mg(2+) is required as a cofactor. [4Fe-4S] cluster serves as cofactor.

The protein localises to the cytoplasm. The catalysed reaction is cytidine(32) in tRNA + S-sulfanyl-L-cysteinyl-[cysteine desulfurase] + AH2 + ATP = 2-thiocytidine(32) in tRNA + L-cysteinyl-[cysteine desulfurase] + A + AMP + diphosphate + H(+). It functions in the pathway tRNA modification. Its function is as follows. Catalyzes the ATP-dependent 2-thiolation of cytidine in position 32 of tRNA, to form 2-thiocytidine (s(2)C32). The sulfur atoms are provided by the cysteine/cysteine desulfurase (IscS) system. This chain is tRNA-cytidine(32) 2-sulfurtransferase, found in Pseudomonas fluorescens (strain Pf0-1).